The sequence spans 248 residues: Isoamyl acetate-hydrolyzing esterase 1 homolog (248 aa).

Ser-24 (nucleophile) is an active-site residue. Lys-63 carries the N6-succinyllysine modification. Catalysis depends on Asp-196, which acts as the Proton donor. The active-site Proton acceptor is His-199.

The protein belongs to the 'GDSL' lipolytic enzyme family. IAH1 subfamily.

In terms of biological role, probable lipase. The protein is Isoamyl acetate-hydrolyzing esterase 1 homolog (IAH1) of Homo sapiens (Human).